A 493-amino-acid chain; its full sequence is Dipeptide permease D (493 aa).

The next 13 membrane-spanning stretches (helical) occupy residues 14 to 34 (VVAL…LLIL), 49 to 69 (ELFS…GYLA), 91 to 111 (LVLG…AIIV), 138 to 158 (GGFS…PIAC), 167 to 187 (WAMG…IFLC), 212 to 232 (NWGW…VLFW), 235 to 255 (WSVY…AKIY), 267 to 287 (LGLI…AQQG), 312 to 332 (MFQS…AWLV), 344 to 364 (IWGK…ILTL), 379 to 399 (LMVL…PVAM), 413 to 433 (VLTG…AGVI), and 458 to 478 (VFEQ…LIWL).

The protein belongs to the major facilitator superfamily. Proton-dependent oligopeptide transporter (POT/PTR) (TC 2.A.17) family. DtpD subfamily.

The protein resides in the cell inner membrane. Functionally, probable proton-dependent permease that transports dipeptides. The sequence is that of Dipeptide permease D from Salmonella choleraesuis (strain SC-B67).